The chain runs to 420 residues: Tyrosine--tRNA ligase (420 aa).

L-tyrosine is bound at residue Y38. The short motif at P43–H52 is the 'HIGH' region element. Y169 and Q173 together coordinate L-tyrosine. The 'KMSKS' region signature appears at K231–S235. Position 234 (K234) interacts with ATP. The 67-residue stretch at K353–I419 folds into the S4 RNA-binding domain.

It belongs to the class-I aminoacyl-tRNA synthetase family. TyrS type 1 subfamily. In terms of assembly, homodimer.

It localises to the cytoplasm. It carries out the reaction tRNA(Tyr) + L-tyrosine + ATP = L-tyrosyl-tRNA(Tyr) + AMP + diphosphate + H(+). Functionally, catalyzes the attachment of tyrosine to tRNA(Tyr) in a two-step reaction: tyrosine is first activated by ATP to form Tyr-AMP and then transferred to the acceptor end of tRNA(Tyr). This is Tyrosine--tRNA ligase from Lactobacillus acidophilus (strain ATCC 700396 / NCK56 / N2 / NCFM).